We begin with the raw amino-acid sequence, 356 residues long: Histidinol-phosphate aminotransferase (356 aa).

At K214 the chain carries N6-(pyridoxal phosphate)lysine.

It belongs to the class-II pyridoxal-phosphate-dependent aminotransferase family. Histidinol-phosphate aminotransferase subfamily. As to quaternary structure, homodimer. Pyridoxal 5'-phosphate is required as a cofactor.

It catalyses the reaction L-histidinol phosphate + 2-oxoglutarate = 3-(imidazol-4-yl)-2-oxopropyl phosphate + L-glutamate. It participates in amino-acid biosynthesis; L-histidine biosynthesis; L-histidine from 5-phospho-alpha-D-ribose 1-diphosphate: step 7/9. In Shigella boydii serotype 18 (strain CDC 3083-94 / BS512), this protein is Histidinol-phosphate aminotransferase.